The chain runs to 86 residues: Cardiotoxin homolog TA-ctx-like (86 aa).

Positions 1 to 21 are cleaved as a signal peptide; it reads MKTLLLTLVVLTIACLDLGYT. Cystine bridges form between Cys24/Cys45, Cys38/Cys62, Cys66/Cys78, and Cys79/Cys84.

It belongs to the three-finger toxin family. Short-chain subfamily. Orphan group IX sub-subfamily. Expressed by the venom gland.

Its subcellular location is the secreted. In Bungarus multicinctus (Many-banded krait), this protein is Cardiotoxin homolog TA-ctx-like.